A 284-amino-acid chain; its full sequence is Tegument protein UL23 (284 aa).

This sequence belongs to the herpesviridae US22 family. In terms of assembly, interacts with host NMI; this interaction inhibits NMI interaction with STAT1.

It localises to the virion tegument. The protein resides in the host cytoplasm. Its function is as follows. Plays a role in the inhibition of host innate immune response by disrupting the interaction between NMI and STAT1. In turn, NMI-mediated transcription of interferon-gamma stimulated genes is inhibited. The sequence is that of Tegument protein UL23 (UL23) from Homo sapiens (Human).